An 87-amino-acid chain; its full sequence is Transcription factor ILI4 (87 aa).

Residues 1 to 54 form the bHLH domain; sequence MSSRRSSRSSVSEEEINELISKLQSLLPSSRRRGANQASTTKLLKETCSYIKSL.

Belongs to the bHLH protein family. As to quaternary structure, interacts with LO9-177. As to expression, expressed in phloem of leaf blades and sheaths, lamina joints, filaments before anthesis, vasculare bundles of the ovule, lemma and palea, and embryos.

It is found in the cytoplasm. Functionally, atypical and probable non DNA-binding bHLH transcription factor that acts as a positive regulator of brassinosteroid (BR) response. Controls lamina inclination by participating in two BR signaling pathways involving BRI1 and RGA1. Involved in the RLI1-dependent modulation of leaf inclination by promoting lamina joint cell elongation, especially in response to phosphate (Pi) availability. The sequence is that of Transcription factor ILI4 (ILI4) from Oryza sativa subsp. japonica (Rice).